The primary structure comprises 165 residues: Ecotin-like protein 4 (165 aa).

This sequence belongs to the protease inhibitor I11 (ecotin) family.

The protein is Ecotin-like protein 4 of Trypanosoma brucei brucei (strain 927/4 GUTat10.1).